The primary structure comprises 59 residues: Large ribosomal subunit protein bL32 (59 aa).

The span at 1 to 19 shows a compositional bias: basic residues; sequence MPVPKRRMSRSNTRSRRAQ. Positions 1–20 are disordered; that stretch reads MPVPKRRMSRSNTRSRRAQW.

The protein belongs to the bacterial ribosomal protein bL32 family.

The chain is Large ribosomal subunit protein bL32 from Acidothermus cellulolyticus (strain ATCC 43068 / DSM 8971 / 11B).